Consider the following 532-residue polypeptide: MVLTPVSPVVLVILDGWGYREELVGNAIAAAHTPVMDSLWQAYPHTLVYTSGKAVGLPKGQMGNSEVGHLNLGAGRIVPQELVRISDAAEDGSLAANPALVQVYEGVKQRGTKLHLVGLCSDGGVHSHLDHLLALLDMAKSLGVTQVCVHAITDGRDTLPTEGKTFIQRLQDHLDRLEMGQIVTLSGRYYAMDRDRRWDRVERAYRVMTSDENIVDTPAWKILANGYAENITDEFLPPVRIAPGAIAAGDGVVFFNFRPDRARQLTQAFVDPNFKGFERSLISPLDFVTFTQYDASLSCAIAFPPQNLSNILGEVIAAKGLKQLRVAETEKYAHVTYFFNGGIEDPLPGEDRILVPSPMVATYDQAPAMSAAQVTQEVIAAVEKGVYSMVVVNYANPDMVGHTGQMKATIQALEAVDRCVGQLLQSVLQMGGTLLITADHGNAECMVDEQGNPWTAHTTNPVPFILVEGEGVKIPGHGTDVALRDDGCLADIAPTILEILRLPQPAEMTGRSLIQPLEVDLRPNRTPVRVRL.

2 residues coordinate Mn(2+): aspartate 15 and serine 65. Serine 65 (phosphoserine intermediate) is an active-site residue. Residues histidine 126, 156–157 (RD), arginine 188, arginine 194, 258–261 (RPDR), and lysine 331 each bind substrate. Residues aspartate 398, histidine 402, aspartate 439, histidine 440, and histidine 457 each coordinate Mn(2+).

Belongs to the BPG-independent phosphoglycerate mutase family. Monomer. Requires Mn(2+) as cofactor.

It catalyses the reaction (2R)-2-phosphoglycerate = (2R)-3-phosphoglycerate. The protein operates within carbohydrate degradation; glycolysis; pyruvate from D-glyceraldehyde 3-phosphate: step 3/5. Its function is as follows. Catalyzes the interconversion of 2-phosphoglycerate and 3-phosphoglycerate. This Cyanothece sp. (strain PCC 7425 / ATCC 29141) protein is 2,3-bisphosphoglycerate-independent phosphoglycerate mutase.